A 297-amino-acid polypeptide reads, in one-letter code: tRNA dimethylallyltransferase (297 aa).

10–17 (GITASGKS) serves as a coordination point for ATP. Residue 12–17 (TASGKS) coordinates substrate. The tract at residues 36 to 39 (DSKQ) is interaction with substrate tRNA.

This sequence belongs to the IPP transferase family. Monomer. Requires Mg(2+) as cofactor.

It carries out the reaction adenosine(37) in tRNA + dimethylallyl diphosphate = N(6)-dimethylallyladenosine(37) in tRNA + diphosphate. Functionally, catalyzes the transfer of a dimethylallyl group onto the adenine at position 37 in tRNAs that read codons beginning with uridine, leading to the formation of N6-(dimethylallyl)adenosine (i(6)A). This chain is tRNA dimethylallyltransferase, found in Wolbachia pipientis wMel.